A 70-amino-acid chain; its full sequence is Protein SlyX homolog (70 aa).

This sequence belongs to the SlyX family.

The chain is Protein SlyX homolog from Pseudoalteromonas atlantica (strain T6c / ATCC BAA-1087).